The primary structure comprises 393 residues: Cytochrome b (393 aa).

4 helical membrane-spanning segments follow: residues 32-52 (FGSL…TLAM), 76-98 (WLIR…LHMG), 113-133 (VWTL…LGYV), and 179-199 (FFAL…MHLI). Heme b contacts are provided by H82 and H96. The heme b site is built by H183 and H197. H202 is an a ubiquinone binding site. 4 helical membrane-spanning segments follow: residues 226 to 246 (FIFK…IFVF), 290 to 310 (LLGV…PFTD), 322 to 342 (LSKI…KLGA), and 349 to 369 (FIEF…IIVP).

Belongs to the cytochrome b family. As to quaternary structure, fungal cytochrome b-c1 complex contains 10 subunits; 3 respiratory subunits, 2 core proteins and 5 low-molecular weight proteins. Cytochrome b-c1 complex is a homodimer. Requires heme b as cofactor.

It localises to the mitochondrion inner membrane. Its function is as follows. Component of the ubiquinol-cytochrome c reductase complex (complex III or cytochrome b-c1 complex) that is part of the mitochondrial respiratory chain. The b-c1 complex mediates electron transfer from ubiquinol to cytochrome c. Contributes to the generation of a proton gradient across the mitochondrial membrane that is then used for ATP synthesis. The protein is Cytochrome b (COB) of Venturia inaequalis (Apple scab fungus).